The primary structure comprises 299 residues: Probable lipid kinase YegS-like (299 aa).

The DAGKc domain occupies 2-133; it reads ATYPESLLIL…VDIAQVNDKT (132 aa). ATP contacts are provided by residues T40, 66-72, and T95; that span reads GDGTINE. The Mg(2+) site is built by L215, D218, and L220. The active-site Proton acceptor is the E271.

It belongs to the diacylglycerol/lipid kinase family. YegS lipid kinase subfamily. It depends on Mg(2+) as a cofactor. Ca(2+) is required as a cofactor.

The protein resides in the cytoplasm. Its function is as follows. Probably phosphorylates lipids; the in vivo substrate is unknown. The polypeptide is Probable lipid kinase YegS-like (Enterobacter sp. (strain 638)).